A 229-amino-acid chain; its full sequence is Large ribosomal subunit protein uL1 (229 aa).

This sequence belongs to the universal ribosomal protein uL1 family. As to quaternary structure, part of the 50S ribosomal subunit.

Functionally, binds directly to 23S rRNA. The L1 stalk is quite mobile in the ribosome, and is involved in E site tRNA release. Protein L1 is also a translational repressor protein, it controls the translation of the L11 operon by binding to its mRNA. The sequence is that of Large ribosomal subunit protein uL1 from Mannheimia succiniciproducens (strain KCTC 0769BP / MBEL55E).